The primary structure comprises 105 residues: Large ribosomal subunit protein bL21 (105 aa).

This sequence belongs to the bacterial ribosomal protein bL21 family. Part of the 50S ribosomal subunit. Contacts protein L20.

Functionally, this protein binds to 23S rRNA in the presence of protein L20. The protein is Large ribosomal subunit protein bL21 of Frankia casuarinae (strain DSM 45818 / CECT 9043 / HFP020203 / CcI3).